Consider the following 330-residue polypeptide: UPF0324 membrane protein BT_4609 (330 aa).

10 helical membrane passes run 16–33, 38–60, 73–95, 99–116, 128–150, 160–182, 189–211, 221–240, 247–269, and 284–306; these read IYVAILSTLTFFLFLDYI, AWSAWVTPPVALFLGLIFALTCG, YLLQYSVVGLGFGMNLQSALASG, MEFTVISVVGTLLIGWFI, SYLISSGTAICGGSAIAAIGPVL, ALGTIFILNAIALFIFPAIGHAL, FGTWAAIAIHDTSSVVGAGAAYG, IKLTRALWIIPMAFATSFIF, ISIPWFIFFFILAMIANTYLLNG, and TLTITMFFIGASLSLDVLRSVGV.

This sequence belongs to the UPF0324 family.

It is found in the cell membrane. The protein is UPF0324 membrane protein BT_4609 of Bacteroides thetaiotaomicron (strain ATCC 29148 / DSM 2079 / JCM 5827 / CCUG 10774 / NCTC 10582 / VPI-5482 / E50).